The following is a 448-amino-acid chain: Probable intron-encoded endonuclease bI1 (448 aa).

Residues 1 to 132 (MRLLKSHPLL…LMMATAFLGY (132 aa)) are cob exon 1 encoded. Transmembrane regions (helical) follow at residues 32–52 (FGSLLACCLIIQIVTGVTLAM), 86–106 (ASAFFFLVYLHIGRGMYYGSY), and 112–132 (LVWAIGTVILILMMATAFLGY). Residues 133–448 (QHSPKWFDIS…QWIVEDFSDK (316 aa)) are cob intron 1 encoded. A GIY-YIG domain is found at 230 to 321 (DLSGVYMIIN…LKLLVPNYNI (92 aa)).

This sequence to endonucleases of group I introns of fungi and phage. The mature protein may arise from proteolytic cleavage of an in-frame translation of cob exon 1 plus intron 1, containing the bI1 open reading frame.

Its subcellular location is the mitochondrion inner membrane. Mitochondrial DNA endonuclease involved in intron homing. This Neurospora crassa (strain ATCC 24698 / 74-OR23-1A / CBS 708.71 / DSM 1257 / FGSC 987) protein is Probable intron-encoded endonuclease bI1 (bI1).